The sequence spans 909 residues: Yellow mounds protein A (909 aa).

Residues 7 to 283 (LNVVSRILNK…KNLFELKNNK (277 aa)) enclose the MIF4G domain. 5 disordered regions span residues 178-232 (SMGG…NNNI), 415-439 (MESS…SGIK), 460-537 (INLP…SSAP), 627-689 (VPPV…SEAR), and 704-774 (SLSG…AKKH). Residues 204-215 (DDDDHDEEDNEN) are compositionally biased toward acidic residues. 2 stretches are compositionally biased toward low complexity: residues 216 to 231 (NYEN…NNNN) and 417 to 436 (SSSN…SSSS). Positions 473-490 (RSNSPSLSSVVKQPQSQQ) are enriched in polar residues. Residues 491–525 (NNNNNNNNNNNNTTITTTTSSNNNINNNNNNNNNN) are compositionally biased toward low complexity. Residues 721 to 738 (STPTLKSTPAIVQNGGSI) are compositionally biased toward polar residues. Low complexity predominate over residues 739-756 (TSTSSSSSSSSSSSSSTT). Residues 845–877 (TMLFDLEEMAQEQQNLEKQNDQQQNLLTQNNQI) adopt a coiled-coil conformation.

Functionally, plays as essential role in regulating terminal differentiation. This is Yellow mounds protein A (yelA) from Dictyostelium discoideum (Social amoeba).